Reading from the N-terminus, the 345-residue chain is Biotin synthase (345 aa).

In terms of domain architecture, Radical SAM core spans 38–256; sequence RQVQVSTLLS…IAVARIMMPA (219 aa). [4Fe-4S] cluster is bound by residues cysteine 53, cysteine 57, and cysteine 60. Residues cysteine 97, cysteine 128, cysteine 188, and arginine 260 each coordinate [2Fe-2S] cluster.

It belongs to the radical SAM superfamily. Biotin synthase family. As to quaternary structure, homodimer. The cofactor is [4Fe-4S] cluster. [2Fe-2S] cluster serves as cofactor.

It catalyses the reaction (4R,5S)-dethiobiotin + (sulfur carrier)-SH + 2 reduced [2Fe-2S]-[ferredoxin] + 2 S-adenosyl-L-methionine = (sulfur carrier)-H + biotin + 2 5'-deoxyadenosine + 2 L-methionine + 2 oxidized [2Fe-2S]-[ferredoxin]. The protein operates within cofactor biosynthesis; biotin biosynthesis; biotin from 7,8-diaminononanoate: step 2/2. Its function is as follows. Catalyzes the conversion of dethiobiotin (DTB) to biotin by the insertion of a sulfur atom into dethiobiotin via a radical-based mechanism. This chain is Biotin synthase, found in Pectobacterium atrosepticum (strain SCRI 1043 / ATCC BAA-672) (Erwinia carotovora subsp. atroseptica).